A 341-amino-acid chain; its full sequence is Phosphoribosylaminoimidazole-succinocarboxamide synthase, chloroplastic (341 aa).

This sequence belongs to the SAICAR synthetase family.

It is found in the plastid. It localises to the chloroplast. It carries out the reaction 5-amino-1-(5-phospho-D-ribosyl)imidazole-4-carboxylate + L-aspartate + ATP = (2S)-2-[5-amino-1-(5-phospho-beta-D-ribosyl)imidazole-4-carboxamido]succinate + ADP + phosphate + 2 H(+). It functions in the pathway purine metabolism; IMP biosynthesis via de novo pathway; 5-amino-1-(5-phospho-D-ribosyl)imidazole-4-carboxamide from 5-amino-1-(5-phospho-D-ribosyl)imidazole-4-carboxylate: step 1/2. The chain is Phosphoribosylaminoimidazole-succinocarboxamide synthase, chloroplastic (PUR7) from Vigna aconitifolia (Moth bean).